The following is a 473-amino-acid chain: Gamma-aminobutyric acid receptor subunit beta-3 (473 aa).

Residues 1-25 (MWGFAGGRLFGIFSAPVLVAVVCCA) form the signal peptide. The Extracellular portion of the chain corresponds to 26–246 (QSVNDPGNMS…FRLKRNIGYF (221 aa)). N-linked (GlcNAc...) asparagine glycans are attached at residues Asn33 and Asn105. Tyr122 contributes to the histamine binding site. Cys161 and Cys175 are joined by a disulfide. N-linked (GlcNAc...) asparagine glycosylation is present at Asn174. Residues Glu180, Tyr182, and Thr227 each coordinate 4-aminobutanoate. Residues 181–182 (SY) and Thr227 contribute to the histamine site. A helical transmembrane segment spans residues 247 to 267 (ILQTYMPSILITILSWVSFWI). Residues 268-271 (NYDA) lie on the Cytoplasmic side of the membrane. Residues 272–292 (SAARVALGITTVLTMTTINTH) form a helical membrane-spanning segment. Residues 293-304 (LRETLPKIPYVK) are Extracellular-facing. A helical membrane pass occupies residues 305–328 (AIDMYLMGCFVFVFLALLEYAFVN). Topologically, residues 329–447 (YIFFGRGPQR…KIPDLTDVNA (119 aa)) are cytoplasmic. A helical membrane pass occupies residues 448-470 (IDRWSRIVFPFTFSLFNLVYWLY). Residues 471 to 473 (YVN) lie on the Extracellular side of the membrane.

This sequence belongs to the ligand-gated ion channel (TC 1.A.9) family. Gamma-aminobutyric acid receptor (TC 1.A.9.5) subfamily. GABRB3 sub-subfamily. As to quaternary structure, heteropentamer, formed by a combination of alpha (GABRA1-6), beta (GABRB1-3), gamma (GABRG1-3), delta (GABRD), epsilon (GABRE), rho (GABRR1-3), pi (GABRP) and theta (GABRQ) chains, each subunit exhibiting distinct physiological and pharmacological properties. Can form functional homopentamers (in vitro). Interacts with UBQLN1. May interact with KIF21B. Identified in a complex of 720 kDa composed of LHFPL4, NLGN2, GABRA1, GABRB2, GABRG2 and GABRB3. Interacts with LHFPL4. Interacts with GIT1; this interaction is required for synaptic GABRB3 surface stability and inhibitory synapse strength.

The protein localises to the postsynaptic cell membrane. The protein resides in the cell membrane. It is found in the cytoplasmic vesicle membrane. It carries out the reaction chloride(in) = chloride(out). Potentiated by histamine. Beta subunit of the heteropentameric ligand-gated chloride channel gated by gamma-aminobutyric acid (GABA), a major inhibitory neurotransmitter in the brain. GABA-gated chloride channels, also named GABA(A) receptors (GABAAR), consist of five subunits arranged around a central pore and contain GABA active binding site(s) located at the alpha and beta subunit interface(s). GABAARs containing beta-3/GABRB3 subunit are found at both synaptic and extrasynaptic sites. When activated by GABA, GABAARs selectively allow the flow of chloride anions across the cell membrane down their electrochemical gradient. Chloride influx into the postsynaptic neuron following GABAAR opening decreases the neuron ability to generate a new action potential, thereby reducing nerve transmission. GABAARs containing alpha-1 and beta-3 subunits exhibit synaptogenic activity; the gamma-2 subunit being necessary but not sufficient to induce rapid synaptic contacts formation. Extrasynaptic beta-3 receptors contribute to the tonic GABAergic inhibition. GABAARs containing alpha-1, beta-3 and epsilon subunits may permit spontaneous chloride channel activity while preserving the structural information required for GABA-gated openings. Beta-containing GABAARs can simultaneously bind GABA and histamine where histamine binds at the interface of two neighboring beta subunits, which may be involved in the regulation of sleep and wakefulness. Plays an important role in somatosensation and in the production of antinociception. The chain is Gamma-aminobutyric acid receptor subunit beta-3 from Mus musculus (Mouse).